A 389-amino-acid chain; its full sequence is SH2 domain-containing protein 2A (389 aa).

Residues 41-63 (AASPQAPEAASNTGNAERAEEVP) are disordered. In terms of domain architecture, SH2 spans 95 to 186 (WFHGFITRRE…PYGETLTEPL (92 aa)). The tract at residues 190–295 (TPEPAGLSLR…PIAFYAMGRG (106 aa)) is disordered. Positions 203-216 (SNFGSKSQDPNPQY) are enriched in polar residues. Residue Ser-217 is modified to Phosphoserine. Short sequence motifs (SH3-binding) lie at residues 244-250 (RPKPPIP) and 272-278 (RPKPSNP). The span at 245-256 (PKPPIPAKPQLP) shows a compositional bias: pro residues. Phosphoserine is present on Ser-296. A disordered region spans residues 324 to 389 (KSWSRPVPGG…QAWLPLGPPQ (66 aa)). Polar residues predominate over residues 337–348 (GGSQLHSENSVI). Residues 352–361 (PPLPHQPPPA) show a composition bias toward pro residues.

As to quaternary structure, interacts with KDR. Interacts with TXK and ITK. Phosphorylated on tyrosine residues. Expression limited to tissues of the immune system and, in particular, activated T-cells. Expressed in peripheral blood leukocytes, thymus and spleen. Much lower expression or undetectable, in brain, placenta, skeletal muscle, prostate, testis, ovary, small intestine, and colon. Expressed at low levels in unstimulated T-cells, but not expressed in normal resting or activated B-cells. According to PubMed:10692392, expression is not restricted to activated T-cells, but strongly expressed in blood cell lineages, the endothelium and other cell and tissue types, such as heart, lung, and liver.

The protein resides in the cytoplasm. Functionally, could be a T-cell-specific adapter protein involved in the control of T-cell activation. May play a role in the CD4-p56-LCK-dependent signal transduction pathway. Could also play an important role in normal and pathological angiogenesis. Could be an adapter protein that facilitates and regulates interaction of KDR with effector proteins important to endothelial cell survival and proliferation. In Homo sapiens (Human), this protein is SH2 domain-containing protein 2A (SH2D2A).